Here is a 375-residue protein sequence, read N- to C-terminus: MKVKVLSLLVPALLVAGAANAAEVYNKDGNKLDLYGKVDGLHYFSDDKSVDGDQTYMRLGFKGETQVTDQLTGYGQWEYQIQGNAPESENNSWTRVAFAGLKFQDIGSFDYGRNYGVVYDVTSWTDVLPEFGGDTYGSDNFMQQRGNGFATYRNTDFFGLVDGLNFAVQYQGQNGSVSGENDPDFTGHGITNNGRKALRQNGDGVGGSITYDYEGFGVGAAVSSSKRTWDQNNTGLIGTGDRAETYTGGLKYDANNIYLAAQYTQTYNATRVGSLGWANKAQNFEAVAQYQFDFGLRPSVAYLQSKGKNLGVVAGRNYDDEDILKYVDVGATYYFNKNMSTYVDYKINLLDDNQFTRAAGINTDDIVALGLVYQF.

An N-terminal signal peptide occupies residues 1–21 (MKVKVLSLLVPALLVAGAANA). The chain crosses the membrane as a beta stranded span at residues 22–27 (AEVYNK). The Periplasmic segment spans residues 28–29 (DG). A beta stranded membrane pass occupies residues 30-44 (NKLDLYGKVDGLHYF). Residues 45–50 (SDDKSV) are Extracellular-facing. Residues 51-66 (DGDQTYMRLGFKGETQ) form a beta stranded membrane-spanning segment. Residues 67 to 70 (VTDQ) lie on the Periplasmic side of the membrane. The beta stranded transmembrane segment at 71–82 (LTGYGQWEYQIQ) threads the bilayer. Over 83 to 91 (GNAPESENN) the chain is Extracellular. A beta stranded membrane pass occupies residues 92 to 103 (SWTRVAFAGLKF). Residues 104-105 (QD) lie on the Periplasmic side of the membrane. Residues 106–113 (IGSFDYGR) form a beta stranded membrane-spanning segment. The Extracellular segment spans residues 114 to 146 (NYGVVYDVTSWTDVLPEFGGDTYGSDNFMQQRG). Residues 147 to 156 (NGFATYRNTD) traverse the membrane as a beta stranded segment. The Periplasmic portion of the chain corresponds to 157 to 163 (FFGLVDG). A beta stranded membrane pass occupies residues 164–172 (LNFAVQYQG). The Extracellular segment spans residues 173 to 201 (QNGSVSGENDPDFTGHGITNNGRKALRQN). A beta stranded membrane pass occupies residues 202–212 (GDGVGGSITYD). Over 213 to 215 (YEG) the chain is Periplasmic. Residues 216–226 (FGVGAAVSSSK) traverse the membrane as a beta stranded segment. The Extracellular portion of the chain corresponds to 227–241 (RTWDQNNTGLIGTGD). The beta stranded transmembrane segment at 242 to 254 (RAETYTGGLKYDA) threads the bilayer. At 255 to 256 (NN) the chain is on the periplasmic side. Residues 257 to 267 (IYLAAQYTQTY) traverse the membrane as a beta stranded segment. Residues 268 to 279 (NATRVGSLGWAN) lie on the Extracellular side of the membrane. A beta stranded membrane pass occupies residues 280–292 (KAQNFEAVAQYQF). The Periplasmic segment spans residues 293–294 (DF). Residues 295–309 (GLRPSVAYLQSKGKN) form a beta stranded membrane-spanning segment. Residues 310–320 (LGVVAGRNYDD) are Extracellular-facing. The beta stranded transmembrane segment at 321–335 (EDILKYVDVGATYYF) threads the bilayer. Residues 336-338 (NKN) lie on the Periplasmic side of the membrane. A beta stranded transmembrane segment spans residues 339–348 (MSTYVDYKIN). Topologically, residues 349–364 (LLDDNQFTRAAGINTD) are extracellular. A beta stranded transmembrane segment spans residues 365-375 (DIVALGLVYQF).

The protein belongs to the Gram-negative porin family. As to quaternary structure, homotrimer. Forms mixed heterotrimers with OmpF; other mixed heterotrimers are also probable. The N- and C-termini are two parts of the same strand. Extracellular loop 3 folds back into the lumen of the barrel forming a constriction zone that controls the pore size, while the trimer interface is formed by the packing of hydrophobic residues on the outer edges of beta strands 1 to 5 and further stabilized by extracellular loop 2 which reaches into the neighboring monomer.

Its subcellular location is the cell outer membrane. Forms pores that allow passive diffusion of small molecules across the outer membrane, including some antibiotics. Variation of the residues in the constriction zone modifies the transverse electric field in the zone, altering antibiotic resistance. In terms of biological role, (Microbial infection) Is not susceptible to CdiA-EC536-mediated toxicity, which uses OmpC-OmpF heterotrimers of some strains as its outer membrane receptor. Mutagenesis of extracellular loops L4 or L5 of this protein confers susceptibility to the toxin. The sequence is that of Outer membrane porin C (ompC) from Escherichia coli O6:H1 (strain CFT073 / ATCC 700928 / UPEC).